The sequence spans 1028 residues: Multidrug resistance protein MdtC (1028 aa).

12 consecutive transmembrane segments (helical) span residues 3–23 (FFAL…AITL), 333–353 (EVEQ…FLFL), 360–380 (LIPA…MYLC), 387–407 (LSLM…IVVL), 431–451 (VGFT…PLLL), 463–483 (FAVT…TLTP), 528–548 (LVGV…ISIP), 853–873 (VILI…LYES), 875–895 (VHPL…LLAL), 897–917 (LFNA…IGIV), 953–973 (PIMM…ISGG), and 984–1004 (ITIV…TPVV).

It belongs to the resistance-nodulation-cell division (RND) (TC 2.A.6) family. MdtC subfamily. Part of a tripartite efflux system composed of MdtA, MdtB and MdtC. MdtC forms a heteromultimer with MdtB.

The protein localises to the cell inner membrane. The chain is Multidrug resistance protein MdtC from Citrobacter koseri (strain ATCC BAA-895 / CDC 4225-83 / SGSC4696).